The following is a 294-amino-acid chain: ATP synthase gamma chain (294 aa).

The protein belongs to the ATPase gamma chain family. In terms of assembly, F-type ATPases have 2 components, CF(1) - the catalytic core - and CF(0) - the membrane proton channel. CF(1) has five subunits: alpha(3), beta(3), gamma(1), delta(1), epsilon(1). CF(0) has three main subunits: a, b and c.

It is found in the cell inner membrane. In terms of biological role, produces ATP from ADP in the presence of a proton gradient across the membrane. The gamma chain is believed to be important in regulating ATPase activity and the flow of protons through the CF(0) complex. The protein is ATP synthase gamma chain of Parvibaculum lavamentivorans (strain DS-1 / DSM 13023 / NCIMB 13966).